A 122-amino-acid polypeptide reads, in one-letter code: Histone H2B, gonadal (122 aa).

Residues 1–31 (MPPKPSGKGQKKAGKAKGAPRTDKKRRRKRK) form a disordered region. The residue at position 2 (proline 2) is a N,N-dimethylproline. Serine 109 carries an O-linked (GlcNAc) serine glycan. Lysine 117 is covalently cross-linked (Glycyl lysine isopeptide (Lys-Gly) (interchain with G-Cter in ubiquitin)).

Belongs to the histone H2B family. As to quaternary structure, the nucleosome is a histone octamer containing two molecules each of H2A, H2B, H3 and H4 assembled in one H3-H4 heterotetramer and two H2A-H2B heterodimers. The octamer wraps approximately 147 bp of DNA. Post-translationally, monoubiquitination of Lys-117 gives a specific tag for epigenetic transcriptional activation and is also prerequisite for histone H3 'Lys-4' and 'Lys-79' methylation. In terms of processing, glcNAcylation at Ser-109 promotes monoubiquitination of Lys-117. It fluctuates in response to extracellular glucose, and associates with transcribed genes.

It is found in the nucleus. It localises to the chromosome. In terms of biological role, core component of nucleosome. Nucleosomes wrap and compact DNA into chromatin, limiting DNA accessibility to the cellular machineries which require DNA as a template. Histones thereby play a central role in transcription regulation, DNA repair, DNA replication and chromosomal stability. DNA accessibility is regulated via a complex set of post-translational modifications of histones, also called histone code, and nucleosome remodeling. In Asterias rubens (Common European starfish), this protein is Histone H2B, gonadal.